We begin with the raw amino-acid sequence, 128 residues long: Large ribosomal subunit protein bL19 (128 aa).

The protein belongs to the bacterial ribosomal protein bL19 family.

Functionally, this protein is located at the 30S-50S ribosomal subunit interface and may play a role in the structure and function of the aminoacyl-tRNA binding site. In Verminephrobacter eiseniae (strain EF01-2), this protein is Large ribosomal subunit protein bL19.